The primary structure comprises 322 residues: Sideroflexin-2 (322 aa).

Methionine 1 bears the N-acetylmethionine mark. 5 helical membrane-spanning segments follow: residues 99 to 119, 147 to 167, 174 to 194, 223 to 243, and 266 to 286; these read GMLI…VIFW, ALSY…MNMW, LVGR…NIPM, VGIA…MILL, and LQVL…CGLF.

It belongs to the sideroflexin family. Expressed in brain, heart, kidney, spleen, thymus, liver, stomach and skin.

The protein resides in the mitochondrion inner membrane. Its subcellular location is the mitochondrion outer membrane. It catalyses the reaction L-serine(in) = L-serine(out). In terms of biological role, mitochondrial amino-acid transporter that mediates transport of serine into mitochondria. Involved in mitochondrial iron homeostasis by regulating heme biosynthesis. The chain is Sideroflexin-2 from Mus musculus (Mouse).